The chain runs to 432 residues: Peptidyl-prolyl cis-trans isomerase cyp6 (432 aa).

The PPIase cyclophilin-type domain occupies 1–168; it reads MSVLIETTVG…RDIRIKHTII (168 aa). A Phosphoserine modification is found at serine 206. The RRM domain occupies 244 to 322; sequence NVLFVCKLNP…SRIHVDFSQS (79 aa). Residues 330–432 form a disordered region; the sequence is YNSNRDRKRS…DRRYRDDRYR (103 aa). Composition is skewed to basic and acidic residues over residues 341–366, 373–395, and 406–432; these read SRSDDREYHRRSDGRYDRSNYRDDYR, DHRDDQSSFRNERFSNYYGDDRS, and NCDDHLRDKSPERRYRYDRRYRDDRYR.

The protein belongs to the cyclophilin-type PPIase family. PPIL4 subfamily.

The protein localises to the nucleus. It carries out the reaction [protein]-peptidylproline (omega=180) = [protein]-peptidylproline (omega=0). PPIases accelerate the folding of proteins. It catalyzes the cis-trans isomerization of proline imidic peptide bonds in oligopeptides. The protein is Peptidyl-prolyl cis-trans isomerase cyp6 (cyp6) of Schizosaccharomyces pombe (strain 972 / ATCC 24843) (Fission yeast).